A 324-amino-acid chain; its full sequence is Mitochondrial thiamine pyrophosphate carrier 1 (324 aa).

Solcar repeat units follow at residues 12–110 (GNRI…ISSA), 119–205 (PQPV…LRSP), and 212–307 (PFGT…VLGL). The next 6 helical transmembrane spans lie at 15-35 (IQVV…VAPL), 79-99 (ITGL…YGGI), 125-145 (FISG…LDLL), 182-202 (TAAI…YEAL), 218-238 (AGAG…LDLV), and 282-299 (GLTV…VTMW).

It belongs to the mitochondrial carrier (TC 2.A.29) family.

Its subcellular location is the mitochondrion inner membrane. Its function is as follows. Mitochondrial transporter that mediates uptake of thiamine pyrophosphate (ThPP) into mitochondria. The protein is Mitochondrial thiamine pyrophosphate carrier 1 (TPC1) of Ajellomyces capsulatus (strain NAm1 / WU24) (Darling's disease fungus).